Here is a 1081-residue protein sequence, read N- to C-terminus: Carbamoyl phosphate synthase large chain (1081 aa).

Residues methionine 1 to glutamate 403 are carboxyphosphate synthetic domain. Arginine 129, arginine 170, glycine 177, lysine 209, leucine 211, glutamate 216, glycine 242, valine 243, histidine 244, glutamine 286, and glutamate 300 together coordinate ATP. One can recognise an ATP-grasp 1 domain in the interval lysine 133–valine 329. Residues glutamine 286, glutamate 300, and asparagine 302 each contribute to the Mg(2+) site. The Mn(2+) site is built by glutamine 286, glutamate 300, and asparagine 302. Residues threonine 404 to valine 553 form an oligomerization domain region. Positions leucine 554–glycine 944 are carbamoyl phosphate synthetic domain. The ATP-grasp 2 domain occupies glutamate 686 to serine 878. Positions 722, 761, 763, 768, 794, 795, 796, 797, 837, and 849 each coordinate ATP. Glutamine 837, glutamate 849, and asparagine 851 together coordinate Mg(2+). 3 residues coordinate Mn(2+): glutamine 837, glutamate 849, and asparagine 851. Residues valine 945 to glycine 1081 enclose the MGS-like domain. The tract at residues valine 945 to glycine 1081 is allosteric domain.

The protein belongs to the CarB family. Composed of two chains; the small (or glutamine) chain promotes the hydrolysis of glutamine to ammonia, which is used by the large (or ammonia) chain to synthesize carbamoyl phosphate. Tetramer of heterodimers (alpha,beta)4. Mg(2+) is required as a cofactor. The cofactor is Mn(2+).

The catalysed reaction is hydrogencarbonate + L-glutamine + 2 ATP + H2O = carbamoyl phosphate + L-glutamate + 2 ADP + phosphate + 2 H(+). The enzyme catalyses hydrogencarbonate + NH4(+) + 2 ATP = carbamoyl phosphate + 2 ADP + phosphate + 2 H(+). It participates in amino-acid biosynthesis; L-arginine biosynthesis; carbamoyl phosphate from bicarbonate: step 1/1. It functions in the pathway pyrimidine metabolism; UMP biosynthesis via de novo pathway; (S)-dihydroorotate from bicarbonate: step 1/3. Functionally, large subunit of the glutamine-dependent carbamoyl phosphate synthetase (CPSase). CPSase catalyzes the formation of carbamoyl phosphate from the ammonia moiety of glutamine, carbonate, and phosphate donated by ATP, constituting the first step of 2 biosynthetic pathways, one leading to arginine and/or urea and the other to pyrimidine nucleotides. The large subunit (synthetase) binds the substrates ammonia (free or transferred from glutamine from the small subunit), hydrogencarbonate and ATP and carries out an ATP-coupled ligase reaction, activating hydrogencarbonate by forming carboxy phosphate which reacts with ammonia to form carbamoyl phosphate. In Synechocystis sp. (strain ATCC 27184 / PCC 6803 / Kazusa), this protein is Carbamoyl phosphate synthase large chain.